A 202-amino-acid chain; its full sequence is Protein phosphatase inhibitor 2 family member C (202 aa).

2 disordered regions span residues 1 to 51 and 71 to 118; these read MSAS…DESS and PGTS…EQES. The tract at residues 12–17 is required for binding PPP1CC; that stretch reads KGILKN. Positions 19 to 35 are enriched in low complexity; it reads SSSGSSVATSGQQSGGT. The interval 43 to 55 is required for binding PPP1CC; it reads KSQKWDESSILAA. A compositionally biased stretch (polar residues) spans 71 to 80; the sequence is PGTSYMSVQD. The segment covering 84-112 has biased composition (basic and acidic residues); sequence DSVRDVEGEDSVRGVEGKEATDASDHSCE. The segment at 144–147 is required for binding PPP1CC catalytic center, displacing metal ions and inhibition of PPP1CC catalytic activity; it reads HYNE. The tract at residues 162–202 is disordered; it reads LQSEDNENEETPQGTNEEKTAAEESEEAPLTGGLQTQSCDP.

It belongs to the protein phosphatase inhibitor 2 family. As to expression, detected in sperm (at protein level).

Its function is as follows. Functions as a protein phosphatase inhibitor. It inhibits activity of the catalytic subunit of PP1 and weakly inhibits the activity of myosin-associated phosphates. The sequence is that of Protein phosphatase inhibitor 2 family member C from Homo sapiens (Human).